Consider the following 444-residue polypeptide: N-succinylarginine dihydrolase (444 aa).

Substrate-binding positions include 19–28 (SGLSVGNIAS), Asn110, and 137–138 (HR). The active site involves Glu174. Position 214 (Arg214) interacts with substrate. His250 is a catalytic residue. Substrate-binding residues include Asp252 and Asn362. Cys368 acts as the Nucleophile in catalysis.

Belongs to the succinylarginine dihydrolase family. As to quaternary structure, homodimer.

The enzyme catalyses N(2)-succinyl-L-arginine + 2 H2O + 2 H(+) = N(2)-succinyl-L-ornithine + 2 NH4(+) + CO2. The protein operates within amino-acid degradation; L-arginine degradation via AST pathway; L-glutamate and succinate from L-arginine: step 2/5. Functionally, catalyzes the hydrolysis of N(2)-succinylarginine into N(2)-succinylornithine, ammonia and CO(2). In Aliivibrio fischeri (strain ATCC 700601 / ES114) (Vibrio fischeri), this protein is N-succinylarginine dihydrolase.